The following is a 189-amino-acid chain: NADH-quinone oxidoreductase subunit B (189 aa).

Residues cysteine 39, cysteine 40, cysteine 104, and cysteine 135 each coordinate [4Fe-4S] cluster.

This sequence belongs to the complex I 20 kDa subunit family. NDH-1 is composed of 14 different subunits. Subunits NuoB, C, D, E, F, and G constitute the peripheral sector of the complex. [4Fe-4S] cluster serves as cofactor.

The protein localises to the cell inner membrane. The catalysed reaction is a quinone + NADH + 5 H(+)(in) = a quinol + NAD(+) + 4 H(+)(out). Its function is as follows. NDH-1 shuttles electrons from NADH, via FMN and iron-sulfur (Fe-S) centers, to quinones in the respiratory chain. The immediate electron acceptor for the enzyme in this species is believed to be a menaquinone. Couples the redox reaction to proton translocation (for every two electrons transferred, four hydrogen ions are translocated across the cytoplasmic membrane), and thus conserves the redox energy in a proton gradient. The polypeptide is NADH-quinone oxidoreductase subunit B (Chlorobium limicola (strain DSM 245 / NBRC 103803 / 6330)).